The chain runs to 300 residues: N-acetylmuramic acid 6-phosphate etherase (300 aa).

The SIS domain maps to 55–217 (IAERLRAGGR…STGAMIRLGK (163 aa)). The Proton donor role is filled by Glu83. Glu114 is an active-site residue.

This sequence belongs to the GCKR-like family. MurNAc-6-P etherase subfamily. Homodimer.

The catalysed reaction is N-acetyl-D-muramate 6-phosphate + H2O = N-acetyl-D-glucosamine 6-phosphate + (R)-lactate. It participates in amino-sugar metabolism; N-acetylmuramate degradation. Specifically catalyzes the cleavage of the D-lactyl ether substituent of MurNAc 6-phosphate, producing GlcNAc 6-phosphate and D-lactate. The polypeptide is N-acetylmuramic acid 6-phosphate etherase (Symbiobacterium thermophilum (strain DSM 24528 / JCM 14929 / IAM 14863 / T)).